The sequence spans 408 residues: CST complex subunit STN1 (408 aa).

Positions 8-195 are interaction with CTC1; the sequence is MQCESSPKEE…KVYDQPFRNP (188 aa). The OB DNA-binding region spans 64–165; the sequence is VDIMGAVISV…EICATIYYKV (102 aa). Winged helix-turn-helix (wHTH) stretches follow at residues 201 to 304 and 305 to 408; these read EALN…YVTS and KDKD…YTAF.

It belongs to the STN1 family. Component of the CST complex, composed of TEN1/C17orf106, CTC1/C17orf68 and STN1; in the complex interacts directly with TEN1 and CTC1. Interacts with ACD/TPP1, POT1 and POLA1.

It localises to the nucleus. It is found in the chromosome. The protein localises to the telomere. Its function is as follows. Component of the CST complex proposed to act as a specialized replication factor promoting DNA replication under conditions of replication stress or natural replication barriers such as the telomere duplex. The CST complex binds single-stranded DNA with high affinity in a sequence-independent manner, while isolated subunits bind DNA with low affinity by themselves. Initially the CST complex has been proposed to protect telomeres from DNA degradation. However, the CST complex has been shown to be involved in several aspects of telomere replication. The CST complex inhibits telomerase and is involved in telomere length homeostasis; it is proposed to bind to newly telomerase-synthesized 3' overhangs and to terminate telomerase action implicating the association with the ACD:POT1 complex thus interfering with its telomerase stimulation activity. The CST complex is also proposed to be involved in fill-in synthesis of the telomeric C-strand probably implicating recruitment and activation of DNA polymerase alpha. The CST complex facilitates recovery from many forms of exogenous DNA damage; seems to be involved in the re-initiation of DNA replication at repaired forks and/or dormant origins. Required for efficicient replication of the duplex region of the telomere. Promotes efficient replication of lagging-strand telomeres. Promotes general replication start following replication-fork stalling implicating new origin firing. May be in involved in C-strand fill-in during late S/G2 phase independent of its role in telomere duplex replication. This Rattus norvegicus (Rat) protein is CST complex subunit STN1.